The following is a 98-amino-acid chain: NADH-ubiquinone oxidoreductase chain 4L (98 aa).

3 helical membrane-spanning segments follow: residues 1 to 21 (MTMV…GLLM), 29 to 49 (SLLC…VTIL), and 61 to 81 (IILL…LVMV).

It belongs to the complex I subunit 4L family. Core subunit of respiratory chain NADH dehydrogenase (Complex I) which is composed of 45 different subunits.

Its subcellular location is the mitochondrion inner membrane. It catalyses the reaction a ubiquinone + NADH + 5 H(+)(in) = a ubiquinol + NAD(+) + 4 H(+)(out). Its function is as follows. Core subunit of the mitochondrial membrane respiratory chain NADH dehydrogenase (Complex I) which catalyzes electron transfer from NADH through the respiratory chain, using ubiquinone as an electron acceptor. Part of the enzyme membrane arm which is embedded in the lipid bilayer and involved in proton translocation. This is NADH-ubiquinone oxidoreductase chain 4L (MT-ND4L) from Mirounga angustirostris (Northern elephant seal).